A 616-amino-acid chain; its full sequence is Dihydroxy-acid dehydratase (616 aa).

Mg(2+) is bound at residue Asp-81. Cys-122 is a [2Fe-2S] cluster binding site. Asp-123 and Lys-124 together coordinate Mg(2+). Lys-124 carries the post-translational modification N6-carboxylysine. Cys-195 lines the [2Fe-2S] cluster pocket. Glu-491 is a Mg(2+) binding site. The Proton acceptor role is filled by Ser-517.

Belongs to the IlvD/Edd family. As to quaternary structure, homodimer. The cofactor is [2Fe-2S] cluster. Requires Mg(2+) as cofactor.

The enzyme catalyses (2R)-2,3-dihydroxy-3-methylbutanoate = 3-methyl-2-oxobutanoate + H2O. It carries out the reaction (2R,3R)-2,3-dihydroxy-3-methylpentanoate = (S)-3-methyl-2-oxopentanoate + H2O. It functions in the pathway amino-acid biosynthesis; L-isoleucine biosynthesis; L-isoleucine from 2-oxobutanoate: step 3/4. The protein operates within amino-acid biosynthesis; L-valine biosynthesis; L-valine from pyruvate: step 3/4. In terms of biological role, functions in the biosynthesis of branched-chain amino acids. Catalyzes the dehydration of (2R,3R)-2,3-dihydroxy-3-methylpentanoate (2,3-dihydroxy-3-methylvalerate) into 2-oxo-3-methylpentanoate (2-oxo-3-methylvalerate) and of (2R)-2,3-dihydroxy-3-methylbutanoate (2,3-dihydroxyisovalerate) into 2-oxo-3-methylbutanoate (2-oxoisovalerate), the penultimate precursor to L-isoleucine and L-valine, respectively. This is Dihydroxy-acid dehydratase from Yersinia pseudotuberculosis serotype I (strain IP32953).